Reading from the N-terminus, the 532-residue chain is MFKNINAAVLLLILSTRNDYANAAAGDNENLFLDLCNLLELGKRAVSKLAPTNLGELAYSEIQKLNMSLSDDAWKAKFAPKKGKQENSNNADGAPRSQEKTHARNHAWRQAATDLAGDEGDKPTLRLAGLEAVTQVEKLQYLSALQPLAERAAAILEQLKTLHSGSAGLTDTNIRQEIQTALYGTGATAPEKTTLQLLKGKGNVGSTRKDICGQDNTAAKADTVLAYLFCICAGHATDSGGAIKVCSQTQPANNKADADVSDAHTHAAALAGQCHGSDTTNDIKAAEIDSAILEFTSKLKAANQKPYFGKYSATGCTGSDAEGICVMFKTTAKGEGKAVKQIPWVLTLHNAAEMIRKQQAVNGKIDSLNQELQAIQTAAYALKPQLEMYKRLQQTTEKARPGKQLTEMQAGECNTHKSNSTCPKNNCKWEEKDGKDGKCVADDSKVTTQGNAPAGAGDGTAGTTTTPNCASHTDKTKCEEENKGKTTPVCGWRKGKEGESDQDKEMCRNGSFLAKKKFALSVVSAAFTALLF.

A signal peptide spans Met-1–Ala-23. An N-linked (GlcNAc...) asparagine glycan is attached at Asn-66. Disordered regions lie at residues Ala-79–Ala-107 and Met-408–Lys-504. A glycan (N-linked (GlcNAc...) asparagine) is linked at Asn-419. A compositionally biased stretch (basic and acidic residues) spans Cys-427 to Lys-445. Residues Gly-450–Ala-470 show a composition bias toward low complexity. Composition is skewed to basic and acidic residues over residues His-472–Gly-484 and Lys-494–Lys-504. An N-linked (GlcNAc...) asparagine glycan is attached at Asn-509. A lipid anchor (GPI-anchor amidated asparagine) is attached at Asn-509. A propeptide spans Gly-510–Phe-532 (removed in mature form).

The protein localises to the cell membrane. VSG forms a coat on the surface of the parasite. The trypanosome evades the immune response of the host by expressing a series of antigenically distinct VSGs from an estimated 1000 VSG genes. The polypeptide is Variant surface glycoprotein ILTAT 1.23 (Trypanosoma brucei brucei).